The primary structure comprises 79 residues: D-alanyl carrier protein (79 aa).

The Carrier domain maps to 1–77; the sequence is MDTKQAVLDI…KIIAKVESLR (77 aa). At S35 the chain carries O-(pantetheine 4'-phosphoryl)serine.

It belongs to the DltC family. 4'-phosphopantetheine is transferred from CoA to a specific serine of apo-DCP.

Its subcellular location is the cytoplasm. It participates in cell wall biogenesis; lipoteichoic acid biosynthesis. Its function is as follows. Carrier protein involved in the D-alanylation of lipoteichoic acid (LTA). The loading of thioester-linked D-alanine onto DltC is catalyzed by D-alanine--D-alanyl carrier protein ligase DltA. The DltC-carried D-alanyl group is further transferred to cell membrane phosphatidylglycerol (PG) by forming an ester bond, probably catalyzed by DltD. D-alanylation of LTA plays an important role in modulating the properties of the cell wall in Gram-positive bacteria, influencing the net charge of the cell wall. The sequence is that of D-alanyl carrier protein from Lactobacillus gasseri (strain ATCC 33323 / DSM 20243 / BCRC 14619 / CIP 102991 / JCM 1131 / KCTC 3163 / NCIMB 11718 / NCTC 13722 / AM63).